Here is a 443-residue protein sequence, read N- to C-terminus: Nuclear hormone receptor family member nhr-60 (443 aa).

Over residues 1-20 the composition is skewed to low complexity; it reads MIQSSSSISQDSLDLPSILS. The interval 1–40 is disordered; sequence MIQSSSSISQDSLDLPSILSTFSADEPEDEPSPTAVKSTK. The segment at residues 44–121 is a DNA-binding region (nuclear receptor); sequence PTECLICGNS…VGMNPLAMEV (78 aa). 2 consecutive NR C4-type zinc fingers follow at residues 47-67 and 83-104; these read CLIC…CNGC and CKAK…CRAC. The 244-residue stretch at 196 to 439 folds into the NR LBD domain; that stretch reads NEFSGLEYLL…KDLVMRVIED (244 aa). Residues 225 to 249 are disordered; it reads LRRDQLGPPRLPKPPSPGKPRDSQH. Positions 233–242 are enriched in pro residues; the sequence is PRLPKPPSPG.

This sequence belongs to the nuclear hormone receptor family.

It is found in the nucleus. In terms of biological role, orphan nuclear receptor (Potential). Required for embryonic and larval morphogenesis and probably for seam cell positioning and migration. This chain is Nuclear hormone receptor family member nhr-60, found in Caenorhabditis elegans.